Reading from the N-terminus, the 653-residue chain is Fusexin 1 (653 aa).

The first 24 residues, 1–24, serve as a signal peptide directing secretion; sequence MKRVGNCWKASVAAFFLLMFTAFA. Over 25 to 559 the chain is Extracellular; it reads AADTTSVDTV…FENIWSGDAN (535 aa). 4 disulfide bridges follow: cysteine 129–cysteine 167, cysteine 398–cysteine 441, cysteine 468–cysteine 487, and cysteine 499–cysteine 516. Residues 155–160 are fusion loop; the sequence is DYWTGS. Residues 560–580 traverse the membrane as a helical segment; sequence ALNWLQVFVTFIAFLGGFALV. At 581-604 the chain is on the cytoplasmic side; that stretch reads GVKLGKIVDGLATEFIPVKDSHVR. A run of 2 helical transmembrane segments spans residues 605-625 and 626-646; these read LVIGLLGGGMIATAVYQLVTD and PLGLLVTVLGLVVMGYLYLSA. The Cytoplasmic segment spans residues 647 to 653; sequence SAPEINL.

The protein belongs to the HAP2/GCS1 family. Fusexin 1 subfamily. In terms of assembly, homotrimer stabilized by interdomain contacts and numerous Ca(2+) and Na(+) ions.

The protein localises to the cell surface. It localises to the cell membrane. In terms of biological role, exhibits fusogenic activity. Mediates cell-cell fusion in mammalian cells (bilateral fusion). The protein is Fusexin 1 of Haloplanus natans (strain DSM 17983 / JCM 14081 / CGMCC 1.8972 / RE-101).